The chain runs to 397 residues: Pectate lyase 2 (397 aa).

The signal sequence occupies residues Met1–Ser25. N-linked (GlcNAc...) asparagine glycosylation occurs at Asn37. Cys54 and Cys71 form a disulfide bridge. The Ca(2+) site is built by Asp194, Asp218, and Asp222. Arg274 is an active-site residue.

It belongs to the polysaccharide lyase 1 family. Amb a subfamily. As to quaternary structure, monomer. Ca(2+) serves as cofactor. Post-translationally, the N-terminus is blocked. In terms of tissue distribution, pollen and flowers.

The enzyme catalyses Eliminative cleavage of (1-&gt;4)-alpha-D-galacturonan to give oligosaccharides with 4-deoxy-alpha-D-galact-4-enuronosyl groups at their non-reducing ends.. The protein operates within glycan metabolism; pectin degradation; 2-dehydro-3-deoxy-D-gluconate from pectin: step 2/5. Its function is as follows. Has pectate lyase activity. The protein is Pectate lyase 2 of Ambrosia artemisiifolia (Common ragweed).